We begin with the raw amino-acid sequence, 129 residues long: MAKSVRSSKKKVKRVVPDAVAHIYSSFNNTIVTITDRQGNALSWATSGGSGFRGSRKSTPFAAQVAAERAADMALEYGVKNVDVLVKGPGSGRDSAIRALNAKNLKVTSITDVTPLPHNGCRPPKKRRV.

Belongs to the universal ribosomal protein uS11 family. As to quaternary structure, part of the 30S ribosomal subunit. Interacts with proteins S7 and S18. Binds to IF-3.

Located on the platform of the 30S subunit, it bridges several disparate RNA helices of the 16S rRNA. Forms part of the Shine-Dalgarno cleft in the 70S ribosome. This chain is Small ribosomal subunit protein uS11, found in Francisella tularensis subsp. holarctica (strain FTNF002-00 / FTA).